We begin with the raw amino-acid sequence, 92 residues long: C-C motif chemokine 3 (92 aa).

Residues 1-26 (MQVSTAALAVLLCTVALCNRISATFA) form the signal peptide. Disulfide bonds link Cys33-Cys57 and Cys34-Cys73.

It belongs to the intercrine beta (chemokine CC) family. Self-associates. Also heterodimer of MIP-1-alpha(4-69) and MIP-1-beta(3-69). Interacts with CCR1.

It is found in the secreted. Monokine with inflammatory and chemokinetic properties. Binds to CCR1, CCR4 and CCR5. One of the major HIV-suppressive factors produced by CD8+ T-cells. Recombinant MIP-1-alpha induces a dose-dependent inhibition of different strains of HIV-1, HIV-2, and simian immunodeficiency virus (SIV). The sequence is that of C-C motif chemokine 3 (CCL3) from Macaca mulatta (Rhesus macaque).